Reading from the N-terminus, the 466-residue chain is DNA repair protein RadA (466 aa).

Residues 12–29 form a C4-type zinc finger; that stretch reads CSECQHVAPKWVGRCANC. 100–107 contacts ATP; sequence GDPGVGKS. The RadA KNRFG motif motif lies at 261–265; sequence KNRFG. Residues 359 to 466 form a lon-protease-like region; sequence DLYLSTVGGM…MREIAIAGAQ (108 aa).

This sequence belongs to the RecA family. RadA subfamily. Interacts with DisA.

Its function is as follows. DNA-dependent ATPase involved in processing of recombination intermediates, plays a role in repairing DNA breaks. Stimulates the branch migration of RecA-mediated strand transfer reactions, allowing the 3' invading strand to extend heteroduplex DNA faster. Binds ssDNA in the presence of ADP but not other nucleotides, has ATPase activity that is stimulated by ssDNA and various branched DNA structures, but inhibited by SSB. Does not have RecA's homology-searching function. Also inhibits the diadenylate cyclase activity of DisA. The chain is DNA repair protein RadA from Mycolicibacterium smegmatis (strain ATCC 700084 / mc(2)155) (Mycobacterium smegmatis).